A 291-amino-acid chain; its full sequence is ATP synthase gamma chain (291 aa).

The protein belongs to the ATPase gamma chain family. In terms of assembly, F-type ATPases have 2 components, CF(1) - the catalytic core - and CF(0) - the membrane proton channel. CF(1) has five subunits: alpha(3), beta(3), gamma(1), delta(1), epsilon(1). CF(0) has three main subunits: a, b and c.

The protein resides in the cell inner membrane. Produces ATP from ADP in the presence of a proton gradient across the membrane. The gamma chain is believed to be important in regulating ATPase activity and the flow of protons through the CF(0) complex. This chain is ATP synthase gamma chain, found in Chlorobium limicola (strain DSM 245 / NBRC 103803 / 6330).